The following is a 135-amino-acid chain: Photosystem II extrinsic protein V (135 aa).

Residues Cys37, Cys40, His41, and His92 each coordinate heme c.

The protein belongs to the cytochrome c family. PsbV subfamily. In terms of assembly, PSII is composed of 1 copy each of membrane proteins PsbA, PsbB, PsbC, PsbD, PsbE, PsbF, PsbH, PsbI, PsbJ, PsbK, PsbL, PsbM, PsbT, PsbX, PsbY, PsbZ, Psb30/Ycf12, peripheral proteins PsbO, CyanoQ (PsbQ), PsbU, PsbV and a large number of cofactors. It forms dimeric complexes. Heme c serves as cofactor.

The protein localises to the cellular thylakoid membrane. Functionally, one of the extrinsic, lumenal subunits of photosystem II (PSII). PSII is a light-driven water plastoquinone oxidoreductase, using light energy to abstract electrons from H(2)O, generating a proton gradient subsequently used for ATP formation. The extrinsic proteins stabilize the structure of photosystem II oxygen-evolving complex (OEC), the ion environment of oxygen evolution and protect the OEC against heat-induced inactivation. Low-potential cytochrome c that plays a role in the OEC of PSII. This Microcystis aeruginosa protein is Photosystem II extrinsic protein V.